Reading from the N-terminus, the 493-residue chain is Xylulose kinase (493 aa).

84 to 85 (QH) contacts substrate. D247 acts as the Proton acceptor in catalysis.

Belongs to the FGGY kinase family.

It catalyses the reaction D-xylulose + ATP = D-xylulose 5-phosphate + ADP + H(+). Functionally, catalyzes the phosphorylation of D-xylulose to D-xylulose 5-phosphate. The polypeptide is Xylulose kinase (Haemophilus influenzae (strain ATCC 51907 / DSM 11121 / KW20 / Rd)).